A 119-amino-acid chain; its full sequence is METLVQAYLDIQGKIAEFRREIKALRVEEKAITANLFEAMGEAGVESIRISEDRYLVAEEKPKRTRSKQQFYQAAEGEGFTQEDVDRLMSLSRGAVTGSSSNVKIRKSAPARNEEDDDG.

A coiled-coil region spans residues Gln-6–Leu-36. The disordered stretch occupies residues Ala-95–Gly-119.

This is an uncharacterized protein from Frog virus 3 (isolate Goorha) (FV-3).